Reading from the N-terminus, the 101-residue chain is uncharacterized protein (101 aa).

It localises to the mitochondrion. This is an uncharacterized protein from Arabidopsis thaliana (Mouse-ear cress).